A 245-amino-acid chain; its full sequence is 1-(5-phosphoribosyl)-5-[(5-phosphoribosylamino)methylideneamino] imidazole-4-carboxamide isomerase (245 aa).

Residue D7 is the Proton acceptor of the active site. The Proton donor role is filled by D129.

Belongs to the HisA/HisF family.

It localises to the cytoplasm. The enzyme catalyses 1-(5-phospho-beta-D-ribosyl)-5-[(5-phospho-beta-D-ribosylamino)methylideneamino]imidazole-4-carboxamide = 5-[(5-phospho-1-deoxy-D-ribulos-1-ylimino)methylamino]-1-(5-phospho-beta-D-ribosyl)imidazole-4-carboxamide. It participates in amino-acid biosynthesis; L-histidine biosynthesis; L-histidine from 5-phospho-alpha-D-ribose 1-diphosphate: step 4/9. The protein is 1-(5-phosphoribosyl)-5-[(5-phosphoribosylamino)methylideneamino] imidazole-4-carboxamide isomerase of Shigella boydii serotype 4 (strain Sb227).